We begin with the raw amino-acid sequence, 164 residues long: MNIKELKDKITDYANIVGEQEGVEIVNVEIYPGGKGLTLRIFIDKEGGVTIKDCENFSRAIEAILDVEDPIKSSYTLEVSSPGIDRPLKNKKDFLRNIGRDVKITTKEKIADNTFFIGKIVDVGDDWVRIEIQETKIKGSKKKGKTELLFIPFNKIIKAQVYLG.

It belongs to the RimP family.

The protein resides in the cytoplasm. Its function is as follows. Required for maturation of 30S ribosomal subunits. The sequence is that of Ribosome maturation factor RimP from Thermodesulfovibrio yellowstonii (strain ATCC 51303 / DSM 11347 / YP87).